Reading from the N-terminus, the 218-residue chain is Testis expressed protein 56 (218 aa).

The chain is Testis expressed protein 56 (Tex56) from Rattus norvegicus (Rat).